The chain runs to 225 residues: ATP-dependent dethiobiotin synthetase BioD 1 (225 aa).

ATP is bound at residue E13–V18. T17 contacts Mg(2+). The active site involves K38. S42 contributes to the substrate binding site. ATP contacts are provided by residues D55, E116–G119, N176–D177, P205–L207, and E212. Mg(2+) is bound by residues D55 and E116.

This sequence belongs to the dethiobiotin synthetase family. Homodimer. Mg(2+) serves as cofactor.

The protein resides in the cytoplasm. It carries out the reaction (7R,8S)-7,8-diammoniononanoate + CO2 + ATP = (4R,5S)-dethiobiotin + ADP + phosphate + 3 H(+). The protein operates within cofactor biosynthesis; biotin biosynthesis; biotin from 7,8-diaminononanoate: step 1/2. Its function is as follows. Catalyzes a mechanistically unusual reaction, the ATP-dependent insertion of CO2 between the N7 and N8 nitrogen atoms of 7,8-diaminopelargonic acid (DAPA, also called 7,8-diammoniononanoate) to form a ureido ring. The sequence is that of ATP-dependent dethiobiotin synthetase BioD 1 from Escherichia coli O157:H7.